The chain runs to 185 residues: Ribosome-recycling factor (185 aa).

This sequence belongs to the RRF family.

Its subcellular location is the cytoplasm. Its function is as follows. Responsible for the release of ribosomes from messenger RNA at the termination of protein biosynthesis. May increase the efficiency of translation by recycling ribosomes from one round of translation to another. The polypeptide is Ribosome-recycling factor (Streptococcus uberis (strain ATCC BAA-854 / 0140J)).